Reading from the N-terminus, the 357-residue chain is Uroporphyrinogen decarboxylase (357 aa).

Substrate contacts are provided by residues 27–31, Asp77, Tyr154, Ser209, and His330; that span reads RQAGR.

This sequence belongs to the uroporphyrinogen decarboxylase family. In terms of assembly, homodimer.

It localises to the cytoplasm. It carries out the reaction uroporphyrinogen III + 4 H(+) = coproporphyrinogen III + 4 CO2. Its pathway is porphyrin-containing compound metabolism; protoporphyrin-IX biosynthesis; coproporphyrinogen-III from 5-aminolevulinate: step 4/4. Catalyzes the decarboxylation of four acetate groups of uroporphyrinogen-III to yield coproporphyrinogen-III. The sequence is that of Uroporphyrinogen decarboxylase from Acinetobacter baumannii (strain SDF).